Reading from the N-terminus, the 257-residue chain is Zinc-finger homeodomain protein 6 (257 aa).

The disordered stretch occupies residues 1-35; that stretch reads MEFRGHDEPVDEMGVAYGRTPPSSSSSPAASASAG. The segment covering 21–35 has biased composition (low complexity); that stretch reads PPSSSSSPAASASAG. The segment at 45–93 adopts a ZF-HD dimerization-type; degenerate zinc-finger fold; that stretch reads YHECLRNHAAAMGGHVVDGCGEFMPMPGDAADALKCAACGCHRSFHRKD. Positions 106 to 125 are enriched in pro residues; it reads PSPPTPRVPLLMPPPQPQPH. 2 disordered regions span residues 106-182 and 228-257; these read PSPP…TKFT and NNKS…QQQQ. Over residues 141–155 the composition is skewed to low complexity; it reads YHHTPSGSGGTTTES. A DNA-binding region (homeobox) is located at residues 174-237; it reads RKRFRTKFTP…NNKSSIGSSS (64 aa). A compositionally biased stretch (low complexity) spans 242-257; it reads RRQPQEQQSQQQQQQQ.

As to quaternary structure, homo- and heterodimer with other ZFHD proteins.

It localises to the nucleus. Its function is as follows. Putative transcription factor. This chain is Zinc-finger homeodomain protein 6 (ZHD6), found in Oryza sativa subsp. indica (Rice).